The sequence spans 245 residues: tRNA (guanine-N(7)-)-methyltransferase (245 aa).

4 residues coordinate S-adenosyl-L-methionine: glutamate 75, glutamate 100, aspartate 127, and aspartate 149. Residue aspartate 149 is part of the active site. Substrate-binding positions include lysine 153, aspartate 185, and 222-225 (TKFE).

Belongs to the class I-like SAM-binding methyltransferase superfamily. TrmB family.

The enzyme catalyses guanosine(46) in tRNA + S-adenosyl-L-methionine = N(7)-methylguanosine(46) in tRNA + S-adenosyl-L-homocysteine. The protein operates within tRNA modification; N(7)-methylguanine-tRNA biosynthesis. Catalyzes the formation of N(7)-methylguanine at position 46 (m7G46) in tRNA. The sequence is that of tRNA (guanine-N(7)-)-methyltransferase from Acinetobacter baylyi (strain ATCC 33305 / BD413 / ADP1).